A 189-amino-acid polypeptide reads, in one-letter code: uncharacterized protein (189 aa).

The Macro domain maps to 1-174 (MKCWTLGDRV…GMEKGVREAL (174 aa)).

This is an uncharacterized protein from Aeropyrum pernix (strain ATCC 700893 / DSM 11879 / JCM 9820 / NBRC 100138 / K1).